The following is an 881-amino-acid chain: DNA mismatch repair protein MutS (881 aa).

626–633 (GPNMAGKS) contributes to the ATP binding site.

This sequence belongs to the DNA mismatch repair MutS family.

Functionally, this protein is involved in the repair of mismatches in DNA. It is possible that it carries out the mismatch recognition step. This protein has a weak ATPase activity. This is DNA mismatch repair protein MutS from Desulfosudis oleivorans (strain DSM 6200 / JCM 39069 / Hxd3) (Desulfococcus oleovorans).